The chain runs to 960 residues: Isoleucine--tRNA ligase (960 aa).

The 'HIGH' region signature appears at 82 to 92; it reads PYANGHIHIGH. Glutamate 606 contributes to the L-isoleucyl-5'-AMP binding site. A 'KMSKS' region motif is present at residues 647-651; it reads KMSKS. Lysine 650 is a binding site for ATP. Residues cysteine 931, cysteine 934, cysteine 951, and cysteine 954 each coordinate Zn(2+).

Belongs to the class-I aminoacyl-tRNA synthetase family. IleS type 1 subfamily. In terms of assembly, monomer. The cofactor is Zn(2+).

The protein localises to the cytoplasm. The enzyme catalyses tRNA(Ile) + L-isoleucine + ATP = L-isoleucyl-tRNA(Ile) + AMP + diphosphate. Its function is as follows. Catalyzes the attachment of isoleucine to tRNA(Ile). As IleRS can inadvertently accommodate and process structurally similar amino acids such as valine, to avoid such errors it has two additional distinct tRNA(Ile)-dependent editing activities. One activity is designated as 'pretransfer' editing and involves the hydrolysis of activated Val-AMP. The other activity is designated 'posttransfer' editing and involves deacylation of mischarged Val-tRNA(Ile). This Gluconobacter oxydans (strain 621H) (Gluconobacter suboxydans) protein is Isoleucine--tRNA ligase.